We begin with the raw amino-acid sequence, 544 residues long: Methionine--tRNA ligase 2 (544 aa).

Positions 10-20 (PYANGSLHLGH) match the 'HIGH' region motif. 4 residues coordinate Zn(2+): cysteine 141, cysteine 144, cysteine 153, and cysteine 156. The short motif at 329 to 333 (KLSTS) is the 'KMSKS' region element. Residue threonine 332 coordinates ATP.

The protein belongs to the class-I aminoacyl-tRNA synthetase family. MetG type 1 subfamily. As to quaternary structure, monomer. Requires Zn(2+) as cofactor.

The protein resides in the cytoplasm. The catalysed reaction is tRNA(Met) + L-methionine + ATP = L-methionyl-tRNA(Met) + AMP + diphosphate. Is required not only for elongation of protein synthesis but also for the initiation of all mRNA translation through initiator tRNA(fMet) aminoacylation. The protein is Methionine--tRNA ligase 2 of Bacillus cereus (strain ATCC 14579 / DSM 31 / CCUG 7414 / JCM 2152 / NBRC 15305 / NCIMB 9373 / NCTC 2599 / NRRL B-3711).